Here is a 343-residue protein sequence, read N- to C-terminus: Putative ALA-interacting subunit 2 (343 aa).

The chain crosses the membrane as a helical span at residues 43-63; the sequence is PISVITVFMLMGFVFIPIGLI. 4 N-linked (GlcNAc...) asparagine glycosylation sites follow: N103, N178, N191, and N218. Residues 301–321 form a helical membrane-spanning segment; that stretch reads FLGITYLVVGSSSIVISIIFM.

This sequence belongs to the CDC50/LEM3 family. As to expression, expressed in roots, leaves, stems, flowers and siliques.

It localises to the membrane. The chain is Putative ALA-interacting subunit 2 (ALIS2) from Arabidopsis thaliana (Mouse-ear cress).